The following is a 252-amino-acid chain: Uracil-DNA glycosylase (252 aa).

Asp-87 acts as the Proton acceptor in catalysis.

Belongs to the uracil-DNA glycosylase (UDG) superfamily. UNG family.

The protein localises to the host nucleus. The enzyme catalyses Hydrolyzes single-stranded DNA or mismatched double-stranded DNA and polynucleotides, releasing free uracil.. Excises uracil residues from the DNA which can arise as a result of misincorporation of dUMP residues by DNA polymerase or deamination of cytosines. Therefore may reduce deleterious uracil incorporation into the viral genome, particularly in terminally differentiated cells which lack DNA repair enzymes. The protein is Uracil-DNA glycosylase (46) of Saimiri sciureus (Common squirrel monkey).